Consider the following 218-residue polypeptide: Thiopurine S-methyltransferase (218 aa).

Residues tryptophan 10, leucine 45, glutamate 66, and arginine 123 each coordinate S-adenosyl-L-methionine.

This sequence belongs to the class I-like SAM-binding methyltransferase superfamily. TPMT family.

It localises to the cytoplasm. The enzyme catalyses S-adenosyl-L-methionine + a thiopurine = S-adenosyl-L-homocysteine + a thiopurine S-methylether.. The protein is Thiopurine S-methyltransferase of Shewanella putrefaciens (strain CN-32 / ATCC BAA-453).